The primary structure comprises 273 residues: NH(3)-dependent NAD(+) synthetase (273 aa).

An ATP-binding site is contributed by 47-54 (GISGGQDS). D53 contacts Mg(2+). R139 is a deamido-NAD(+) binding site. T159 is an ATP binding site. E164 is a Mg(2+) binding site. The deamido-NAD(+) site is built by K172 and D179. 2 residues coordinate ATP: K188 and T210. 259 to 260 (HK) is a binding site for deamido-NAD(+).

This sequence belongs to the NAD synthetase family. In terms of assembly, homodimer.

The catalysed reaction is deamido-NAD(+) + NH4(+) + ATP = AMP + diphosphate + NAD(+) + H(+). It participates in cofactor biosynthesis; NAD(+) biosynthesis; NAD(+) from deamido-NAD(+) (ammonia route): step 1/1. Catalyzes the ATP-dependent amidation of deamido-NAD to form NAD. Uses ammonia as a nitrogen source. This is NH(3)-dependent NAD(+) synthetase from Staphylococcus aureus (strain MRSA252).